Consider the following 1282-residue polypeptide: Myosin-1 (1282 aa).

The segment at Met-1–Val-30 is disordered. A Myosin motor domain is found at Ala-44–Asp-723. Gly-137 to Thr-144 contributes to the ATP binding site. Ser-365 carries the phosphoserine modification. The tract at residues Val-412–Ala-494 is actin-binding. Positions Leu-569 to Asp-590 are disordered. IQ domains are found at residues His-727–Cys-747 and Ala-748–Gln-773. Positions Arg-781–Ala-977 constitute a TH1 domain. A disordered region spans residues Ser-973–Glu-1073. Residues Pro-1029–Ala-1058 are compositionally biased toward low complexity. The span at Pro-1059 to Ala-1068 shows a compositional bias: pro residues. Positions Pro-1074–Gln-1135 constitute an SH3 domain. The segment at Ala-1237–Arg-1282 is disordered. Positions Gly-1252–Gly-1269 are enriched in low complexity.

This sequence belongs to the TRAFAC class myosin-kinesin ATPase superfamily. Myosin family. Post-translationally, phosphorylation of the TEDS site (Ser-365) is required for the polarization of the actin cytoskeleton. Phosphorylation probably activates the myosin-I ATPase activity.

Its subcellular location is the cytoplasm. The protein resides in the cytoskeleton. It is found in the actin patch. Functionally, type-I myosin implicated in the organization of the actin cytoskeleton. Required for proper actin cytoskeleton polarization. At the cell cortex, assembles in patch-like structures together with proteins from the actin-polymerizing machinery and promotes actin assembly. Functions as actin nucleation-promoting factor (NPF) for the Arp2/3 complex. This Mycosarcoma maydis (Corn smut fungus) protein is Myosin-1 (myo1).